The following is a 63-amino-acid chain: Large ribosomal subunit protein bL32 (63 aa).

Over residues 1–16 (MAVPKRKTSRMKRGFR) the composition is skewed to basic residues. The disordered stretch occupies residues 1–22 (MAVPKRKTSRMKRGFRRSADAI).

Belongs to the bacterial ribosomal protein bL32 family.

The chain is Large ribosomal subunit protein bL32 from Beijerinckia indica subsp. indica (strain ATCC 9039 / DSM 1715 / NCIMB 8712).